The chain runs to 730 residues: Heterogeneous nuclear ribonucleoprotein M (730 aa).

Positions 1 to 13 (MAAGVEAAAEVAA) are enriched in low complexity. A disordered region spans residues 1-62 (MAAGVEAAAE…NIKRGGNRFE (62 aa)). Ala2 bears the N-acetylalanine mark. A Glycyl lysine isopeptide (Lys-Gly) (interchain with G-Cter in SUMO2) cross-link involves residue Lys17. Ser29 is subject to Phosphoserine. Lys37 is covalently cross-linked (Glycyl lysine isopeptide (Lys-Gly) (interchain with G-Cter in SUMO2)). The segment covering 38-50 (GEGERPAQNEKRK) has biased composition (basic and acidic residues). Residues Lys69 and Lys83 each participate in a glycyl lysine isopeptide (Lys-Gly) (interchain with G-Cter in SUMO2) cross-link. 2 consecutive RRM domains span residues 71 to 149 (YRAF…EDPD) and 204 to 281 (STVF…MDER). Ser86 carries the phosphoserine modification. Glycyl lysine isopeptide (Lys-Gly) (interchain with G-Cter in SUMO2) cross-links involve residues Lys88 and Lys127. Lys134 is subject to N6-acetyllysine; alternate. Lys134 is covalently cross-linked (Glycyl lysine isopeptide (Lys-Gly) (interchain with G-Cter in SUMO2); alternate). Residues Lys143 and Lys145 each participate in a glycyl lysine isopeptide (Lys-Gly) (interchain with G-Cter in SUMO2) cross-link. Phosphoserine is present on Ser204. A Glycyl lysine isopeptide (Lys-Gly) (interchain with G-Cter in SUMO2) cross-link involves residue Lys221. Lys277 bears the N6-acetyllysine; alternate mark. Lys277 participates in a covalent cross-link: Glycyl lysine isopeptide (Lys-Gly) (interchain with G-Cter in SUMO2); alternate. Glycyl lysine isopeptide (Lys-Gly) (interchain with G-Cter in SUMO2) cross-links involve residues Lys285 and Lys345. A phosphoserine mark is found at Ser365 and Ser377. Residues Lys381 and Lys388 each participate in a glycyl lysine isopeptide (Lys-Gly) (interchain with G-Cter in SUMO2) cross-link. Ser397 is modified (phosphoserine). Tandem repeats lie at residues 400 to 405 (GIERMG), 407 to 412 (GIDRLG), 415 to 420 (GMERMG), and 426 to 431 (GMDRVG). The tract at residues 400 to 608 (GIERMGPGID…ALGAGIERMG (209 aa)) is 27 X 6 AA repeats of [GEVSTPAN]-[ILMV]-[DE]-[RH]-[MLVI]-[GAV]. Ser432 carries the phosphoserine modification. A run of 3 repeats spans residues 433–438 (EIERMG), 440–445 (VMDRMG), and 446–451 (SVERMG). Ser452 is subject to Phosphoserine. 4 tandem repeats follow at residues 453-458 (GIERMG), 461-466 (GLDHMA), 468-473 (SIERMG), and 475-480 (TMERIG). Phosphoserine is present on Ser468. At Ser481 the chain carries Phosphoserine. 16 repeat units span residues 482 to 487 (GVERMG), 493 to 498 (GLERMA), 500 to 505 (PIDRVG), 507 to 512 (TIERMG), 514 to 519 (GVERMG), 521 to 526 (AIERMG), 528 to 533 (SMERMV), 540 to 545 (GLERMG), 547 to 552 (VMDRMA), 554 to 559 (GLERMG), 562 to 566 (NLERM), 567 to 572 (GLERMG), 575 to 579 (SLERM), 580 to 585 (GLERMG), 588 to 593 (SLERMG), and 603 to 608 (GIERMG). Arg496 is subject to Omega-N-methylarginine. Ser528 is subject to Phosphoserine. Phosphoserine is present on Ser575. Ser588 is subject to Phosphoserine. Ser618, Ser633, and Ser637 each carry phosphoserine. Lys651 is covalently cross-linked (Glycyl lysine isopeptide (Lys-Gly) (interchain with G-Cter in SUMO2)). Positions 653-729 (CQIFVRNLPF…REIDVRIDRN (77 aa)) constitute an RRM 3 domain. Phosphothreonine is present on Thr665. Residue Lys667 forms a Glycyl lysine isopeptide (Lys-Gly) (interchain with G-Cter in SUMO2) linkage. Lys672 is subject to N6-acetyllysine. Glycyl lysine isopeptide (Lys-Gly) (interchain with G-Cter in SUMO2) cross-links involve residues Lys685 and Lys692. The residue at position 698 (Lys698) is an N6-acetyllysine; alternate. A Glycyl lysine isopeptide (Lys-Gly) (interchain with G-Cter in SUMO2); alternate cross-link involves residue Lys698. Lys698 participates in a covalent cross-link: Glycyl lysine isopeptide (Lys-Gly) (interchain with G-Cter in SUMO1); alternate. Phosphoserine is present on Ser701. Lys716 is covalently cross-linked (Glycyl lysine isopeptide (Lys-Gly) (interchain with G-Cter in SUMO2)).

As to quaternary structure, identified in the spliceosome C complex. Interacts with PPIA/CYPA. Sumoylated.

Its subcellular location is the nucleus. It is found in the nucleolus. Its function is as follows. Pre-mRNA binding protein in vivo, binds avidly to poly(G) and poly(U) RNA homopolymers in vitro. Involved in splicing. Acts as a receptor for carcinoembryonic antigen in Kupffer cells, may initiate a series of signaling events leading to tyrosine phosphorylation of proteins and induction of IL-1 alpha, IL-6, IL-10 and tumor necrosis factor alpha cytokines. This Homo sapiens (Human) protein is Heterogeneous nuclear ribonucleoprotein M (HNRNPM).